The chain runs to 567 residues: 2-succinyl-5-enolpyruvyl-6-hydroxy-3-cyclohexene-1-carboxylate synthase (567 aa).

It belongs to the TPP enzyme family. MenD subfamily. Homodimer. The cofactor is Mg(2+). It depends on Mn(2+) as a cofactor. Requires thiamine diphosphate as cofactor.

It carries out the reaction isochorismate + 2-oxoglutarate + H(+) = 5-enolpyruvoyl-6-hydroxy-2-succinyl-cyclohex-3-ene-1-carboxylate + CO2. It participates in quinol/quinone metabolism; 1,4-dihydroxy-2-naphthoate biosynthesis; 1,4-dihydroxy-2-naphthoate from chorismate: step 2/7. It functions in the pathway quinol/quinone metabolism; menaquinone biosynthesis. Its function is as follows. Catalyzes the thiamine diphosphate-dependent decarboxylation of 2-oxoglutarate and the subsequent addition of the resulting succinic semialdehyde-thiamine pyrophosphate anion to isochorismate to yield 2-succinyl-5-enolpyruvyl-6-hydroxy-3-cyclohexene-1-carboxylate (SEPHCHC). This chain is 2-succinyl-5-enolpyruvyl-6-hydroxy-3-cyclohexene-1-carboxylate synthase, found in Yersinia pestis bv. Antiqua (strain Antiqua).